The chain runs to 302 residues: Heme A synthase (302 aa).

Residues 1–8 (MFRKQNLK) lie on the Cytoplasmic side of the membrane. Residues 9-29 (WLGVLATIIMTFVQLGGALVT) form a helical membrane-spanning segment. Over 30–67 (KTGSEDGCGSSWPLCNGALLPENLPIQTIIELSHRAVS) the chain is Extracellular. Cys37 and Cys44 are disulfide-bonded. Glu60 is a catalytic residue. His63 serves as a coordination point for heme o. The helical transmembrane segment at 68–88 (AISLIVVLWLVITAWKNIGYI) threads the bilayer. Residues 89-93 (KEIKP) lie on the Cytoplasmic side of the membrane. The helical transmembrane segment at 94-114 (LSIISVGFLLVQALVGAAAVI) threads the bilayer. At 115-125 (WQQNPYVLALH) the chain is on the extracellular side. His125 contacts heme o. A helical transmembrane segment spans residues 126–146 (FGISLISFSSVFLMTLIIFSI). At 147 to 161 (DKKYEADILFIHKPL) the chain is on the cytoplasmic side. Residues 162–182 (RILTWLMAIIVYLTIYTGALV) traverse the membrane as a helical segment. Residues 183-215 (RHTKSSLAYGAWPIPFDDIVPHNAHDWVQFSHR) lie on the Extracellular side of the membrane. His214 is a heme b binding site. A helical transmembrane segment spans residues 216–236 (GMAFITFIWIMITFIHAIKNY). Residues 237–244 (SDNRTVRY) lie on the Cytoplasmic side of the membrane. A helical transmembrane segment spans residues 245 to 265 (GYTASFILVILQVITGALSVI). At 266–270 (TNVNL) the chain is on the extracellular side. Residues 271 to 291 (IIALFHALFITYLFGMIAYFI) form a helical membrane-spanning segment. His276 is a heme b binding site. Topologically, residues 292–302 (LLMLRTTRSLK) are cytoplasmic.

The protein belongs to the COX15/CtaA family. Type 1 subfamily. Interacts with CtaB. Heme b is required as a cofactor.

It is found in the cell membrane. The catalysed reaction is Fe(II)-heme o + 2 A + H2O = Fe(II)-heme a + 2 AH2. Its pathway is porphyrin-containing compound metabolism; heme A biosynthesis; heme A from heme O: step 1/1. Catalyzes the conversion of heme O to heme A by two successive hydroxylations of the methyl group at C8. The first hydroxylation forms heme I, the second hydroxylation results in an unstable dihydroxymethyl group, which spontaneously dehydrates, resulting in the formyl group of heme A. This Staphylococcus epidermidis (strain ATCC 12228 / FDA PCI 1200) protein is Heme A synthase.